A 282-amino-acid chain; its full sequence is Pantothenate synthetase (282 aa).

30–37 (MGYLHEGH) is an ATP binding site. His37 serves as the catalytic Proton donor. Gln61 lines the (R)-pantoate pocket. Residue Gln61 coordinates beta-alanine. 147-150 (GMKD) serves as a coordination point for ATP. Gln153 serves as a coordination point for (R)-pantoate. Residues Val176 and 184 to 187 (KSSR) each bind ATP.

It belongs to the pantothenate synthetase family. As to quaternary structure, homodimer.

It localises to the cytoplasm. The enzyme catalyses (R)-pantoate + beta-alanine + ATP = (R)-pantothenate + AMP + diphosphate + H(+). It participates in cofactor biosynthesis; (R)-pantothenate biosynthesis; (R)-pantothenate from (R)-pantoate and beta-alanine: step 1/1. Catalyzes the condensation of pantoate with beta-alanine in an ATP-dependent reaction via a pantoyl-adenylate intermediate. The sequence is that of Pantothenate synthetase from Bacillus cereus (strain B4264).